Consider the following 310-residue polypeptide: Malate dehydrogenase (310 aa).

Residues 7-12 (GAGNVG) and D32 contribute to the NAD(+) site. The substrate site is built by R81 and R87. NAD(+) is bound by residues N94 and 117–119 (VSN). N119 and R150 together coordinate substrate. The Proton acceptor role is filled by H174.

It belongs to the LDH/MDH superfamily. MDH type 3 family.

It carries out the reaction (S)-malate + NAD(+) = oxaloacetate + NADH + H(+). Catalyzes the reversible oxidation of malate to oxaloacetate. The chain is Malate dehydrogenase from Chlorobium luteolum (strain DSM 273 / BCRC 81028 / 2530) (Pelodictyon luteolum).